A 279-amino-acid polypeptide reads, in one-letter code: Ethanolamine utilization protein EutJ (279 aa).

It belongs to the EutJ family.

It functions in the pathway amine and polyamine degradation; ethanolamine degradation. Its function is as follows. May protect ethanolamine ammonia-lyase (EAL, eutB-eutC) from inhibition, may function in assembling the bacterial microcompartment and/or in refolding EAL, suggesting it may have chaperone activity. Overexpression of eutJ and eutS in E.coli leads to multiple BMC-like structures; eutS expression alone leads to 1 BMC-like structure per cell. Functionally, expression of the eut operon allows this bacteria to use ethanolamine (EA) as a carbon, nitrogen and energy source. It relies on cobalamin (vitamin B12) both as a cofactor for the ethanolamine ammonia-lyase (EAL) activity and to induce the operon. EA enhances bacterial survival in macrophages in a concentration-dependent manner, suggesting it is an important nutrient during infection. This is Ethanolamine utilization protein EutJ from Salmonella typhimurium (strain LT2 / SGSC1412 / ATCC 700720).